Here is a 243-residue protein sequence, read N- to C-terminus: Adenosine 5'-phosphosulfate reductase (243 aa).

[4Fe-4S] cluster-binding residues include cysteine 126, cysteine 127, cysteine 209, and cysteine 212. Cysteine 235 (nucleophile; cysteine thiosulfonate intermediate) is an active-site residue.

It belongs to the PAPS reductase family. CysH subfamily. [4Fe-4S] cluster serves as cofactor.

It localises to the cytoplasm. It catalyses the reaction [thioredoxin]-disulfide + sulfite + AMP + 2 H(+) = adenosine 5'-phosphosulfate + [thioredoxin]-dithiol. It participates in sulfur metabolism; hydrogen sulfide biosynthesis; sulfite from sulfate. Catalyzes the formation of sulfite from adenosine 5'-phosphosulfate (APS) using thioredoxin as an electron donor. This chain is Adenosine 5'-phosphosulfate reductase, found in Staphylococcus epidermidis (strain ATCC 35984 / DSM 28319 / BCRC 17069 / CCUG 31568 / BM 3577 / RP62A).